The sequence spans 420 residues: ATP phosphoribosyltransferase regulatory subunit (420 aa).

Belongs to the class-II aminoacyl-tRNA synthetase family. HisZ subfamily. As to quaternary structure, heteromultimer composed of HisG and HisZ subunits.

It localises to the cytoplasm. The protein operates within amino-acid biosynthesis; L-histidine biosynthesis; L-histidine from 5-phospho-alpha-D-ribose 1-diphosphate: step 1/9. Its function is as follows. Required for the first step of histidine biosynthesis. May allow the feedback regulation of ATP phosphoribosyltransferase activity by histidine. The polypeptide is ATP phosphoribosyltransferase regulatory subunit (Bacillus thuringiensis subsp. konkukian (strain 97-27)).